We begin with the raw amino-acid sequence, 604 residues long: 3-hydroxy-3-methylglutaryl-coenzyme A reductase 2 (604 aa).

2 consecutive transmembrane segments (helical) span residues 47–67 (LPLY…MYFL) and 91–111 (AIVS…IGFV). The tract at residues 112–188 (QTFVARGNND…APLVTPAASE (77 aa)) is linker. An N-linked (GlcNAc...) asparagine glycan is attached at N120. The tract at residues 189–604 (EDEEIIKSVV…STKDVTKASS (416 aa)) is catalytic. E283 acts as the Charge relay system in catalysis. N347 carries an N-linked (GlcNAc...) asparagine glycan. K415 functions as the Charge relay system in the catalytic mechanism. N-linked (GlcNAc...) asparagine glycosylation is present at N460. Catalysis depends on D491, which acts as the Charge relay system. The Proton donor role is filled by H589. N-linked (GlcNAc...) asparagine glycosylation is present at N593.

The protein belongs to the HMG-CoA reductase family.

The protein resides in the endoplasmic reticulum membrane. The enzyme catalyses (R)-mevalonate + 2 NADP(+) + CoA = (3S)-3-hydroxy-3-methylglutaryl-CoA + 2 NADPH + 2 H(+). Its pathway is metabolic intermediate biosynthesis; (R)-mevalonate biosynthesis; (R)-mevalonate from acetyl-CoA: step 3/3. Its function is as follows. Catalyzes the synthesis of mevalonate. The specific precursor of all isoprenoid compounds present in plants. The polypeptide is 3-hydroxy-3-methylglutaryl-coenzyme A reductase 2 (HMGR2) (Capsicum annuum (Capsicum pepper)).